Reading from the N-terminus, the 284-residue chain is F-box protein PP2-B5 (284 aa).

The F-box domain maps to 32–80 (ASFDDLPDDCLAIISSFTSTPRDAFLAALVSKSFGLQFNSDSVWEKFLP).

The polypeptide is F-box protein PP2-B5 (PP2B5) (Arabidopsis thaliana (Mouse-ear cress)).